A 363-amino-acid polypeptide reads, in one-letter code: Serpentine receptor class beta-17 (363 aa).

Helical transmembrane passes span 46-66 (AFLL…GSII), 75-95 (LLAF…SCFL), 120-140 (VILA…SMLC), 169-189 (IGFV…LYMY), 214-234 (YIFI…IGLY), 273-293 (CAQL…RIFL), and 304-324 (VTEF…ICIV).

The protein belongs to the nematode receptor-like protein srb family.

It is found in the membrane. The protein is Serpentine receptor class beta-17 (srb-17) of Caenorhabditis elegans.